The primary structure comprises 229 residues: Methyltransferase ctvB (229 aa).

It belongs to the methyltransferase superfamily.

It functions in the pathway mycotoxin biosynthesis. Functionally, methyltransferase; part of the gene cluster that mediates the biosynthesis of citreoviridin, an inhibitor of the of F1-ATPase beta-subunit. The HR-PKS ctvA accepts acetyl-CoA as the starter unit and catalyzes eight iterations of malonyl-CoA extension and four iterations of SAM-dependent methylation at C4, C12, C14, and C16. The KR and DH domains selectively act on the first six iterations to generate the hexaene chain. In the last three iterations, the KR and DH domains terminate their functions to yield a beta,delta-diketo ester moiety, which then undergoes intramolecular cyclization to yield an alpha-pyrone intermediate. Subsequently, ctvB methylates the alpha-pyrone hydroxyl group to generate citreomontanin. In order to form the tetrahydrofuran ring with the correct stereochemistry, the terminal alkenes of citreomontanin need to undergo isomerization to yield a (17Z)-hexaene, a step that could be catalyzed by ctvC. The (17Z)-hexaene then undergoes bisepoxidation by ctvC to form a (17R,16R,15S,14R)-bisepoxide moiety. Lastly, ctvD acts as a regioselective hydrolase to form the tetrahydrofuran ring with the substituents in the correct absolute configuration, completing the biosynthesis of citreoviridin. This is Methyltransferase ctvB from Aspergillus terreus (strain NIH 2624 / FGSC A1156).